The following is a 73-amino-acid chain: Crustacean hyperglycemic hormone (73 aa).

Disulfide bonds link C7–C43, C23–C39, and C26–C52. Serine amide is present on S73.

Produced by the medulla terminalis X-organ in the eyestalks and transported to the sinus gland where they are stored and released. Found also in the brain; in the neuroendocrine structures of the protocerebrum.

The protein resides in the secreted. Hormone found in the sinus gland of isopods and decapods which controls the blood sugar level. Has a secretagogue action over the amylase released from the midgut gland. May act as a stress hormone and may be involved in the control of molting and reproduction. The polypeptide is Crustacean hyperglycemic hormone (Armadillidium vulgare (Pillbug)).